The chain runs to 217 residues: Glycosylphosphatidylinositol anchor biosynthesis protein 11 (217 aa).

6 helical membrane-spanning segments follow: residues 45–61 (TWQT…YWFI), 74–94 (WLLV…ATVY), 111–131 (VTCI…GAPF), 138–158 (TWLL…SVLN), 169–189 (YFIS…LDWD), and 195–215 (WPIP…TFCS).

The protein belongs to the PIGF family.

The protein resides in the endoplasmic reticulum membrane. Its pathway is glycolipid biosynthesis; glycosylphosphatidylinositol-anchor biosynthesis. In terms of biological role, acts in the GPI biosynthetic pathway between GlcNAc-PI synthesis and GPI transfer to protein. The protein is Glycosylphosphatidylinositol anchor biosynthesis protein 11 (GPI11) of Eremothecium gossypii (strain ATCC 10895 / CBS 109.51 / FGSC 9923 / NRRL Y-1056) (Yeast).